We begin with the raw amino-acid sequence, 398 residues long: Phosphoglycerate kinase (398 aa).

Substrate-binding positions include 21-23 (DFN), R36, 59-62 (HLGR), R119, and R157. ATP contacts are provided by residues K208, G296, E327, and 354-357 (GGDS).

Belongs to the phosphoglycerate kinase family. In terms of assembly, monomer.

It is found in the cytoplasm. The catalysed reaction is (2R)-3-phosphoglycerate + ATP = (2R)-3-phospho-glyceroyl phosphate + ADP. It functions in the pathway carbohydrate degradation; glycolysis; pyruvate from D-glyceraldehyde 3-phosphate: step 2/5. The protein is Phosphoglycerate kinase of Streptococcus pneumoniae (strain 70585).